The chain runs to 131 residues: Fumarate reductase subunit C (131 aa).

The next 3 membrane-spanning stretches (helical) occupy residues 30–50 (EGTA…LFAL), 57–77 (WMGF…LITL), and 109–129 (IIKG…YVAL).

It belongs to the FrdC family. As to quaternary structure, part of an enzyme complex containing four subunits: a flavoprotein (FrdA), an iron-sulfur protein (FrdB), and two hydrophobic anchor proteins (FrdC and FrdD).

The protein localises to the cell inner membrane. In terms of biological role, two distinct, membrane-bound, FAD-containing enzymes are responsible for the catalysis of fumarate and succinate interconversion; fumarate reductase is used in anaerobic growth, and succinate dehydrogenase is used in aerobic growth. Anchors the catalytic components of the fumarate reductase complex to the cell inner membrane, binds quinones. The chain is Fumarate reductase subunit C from Salmonella dublin (strain CT_02021853).